The sequence spans 489 residues: NAC domain-containing protein 74 (489 aa).

The 151-residue stretch at 9–159 (LPPGFGFHPK…AYVLCRITKR (151 aa)) folds into the NAC domain. The DNA-binding element occupies 108 to 165 (IGTKKTLVFHEGRPPTGRRTEWIMHEYYIDERECQACPDMKDAYVLCRITKRNDWIPG). Residues 413-427 (KNQAHDVASTKRSDA) are compositionally biased toward basic and acidic residues. The tract at residues 413–435 (KNQAHDVASTKRSDAGKPSTELS) is disordered. Residues 456–476 (WNMILVAGFAIGVAVVALHIG) form a helical membrane-spanning segment.

Widely expressed.

It localises to the nucleus. The protein resides in the cell membrane. Transcription activator involved in heat and endoplasmic reticulum (ER) stress responses. Regulates the expression of genes involved in ER protein folding and heat stress-responsive genes. Binds directly to the promoter of BZIP74 and regulates its expression in response to heat stress. The protein is NAC domain-containing protein 74 of Oryza sativa subsp. japonica (Rice).